The chain runs to 244 residues: Small ribosomal subunit protein uS2 (244 aa).

This sequence belongs to the universal ribosomal protein uS2 family.

This Endomicrobium trichonymphae protein is Small ribosomal subunit protein uS2.